A 366-amino-acid polypeptide reads, in one-letter code: ATP-dependent 6-phosphofructokinase (366 aa).

Residues glycine 16, 78–79, and 118–121 each bind ATP; these read RE and GNGT. The tract at residues 74-94 is disordered; that stretch reads LGTSREKPFKPDPGEKDSEAG. Residues 77–94 show a composition bias toward basic and acidic residues; it reads SREKPFKPDPGEKDSEAG. Position 119 (asparagine 119) interacts with Mg(2+). Residues 141–143, arginine 178, 185–187, glutamate 238, arginine 282, and 288–291 contribute to the substrate site; these read TID, MGH, and YLQR. Catalysis depends on aspartate 143, which acts as the Proton acceptor.

This sequence belongs to the phosphofructokinase type A (PFKA) family. Mixed-substrate PFK group III subfamily. Homodimer or homotetramer. Requires Mg(2+) as cofactor.

It is found in the cytoplasm. It catalyses the reaction beta-D-fructose 6-phosphate + ATP = beta-D-fructose 1,6-bisphosphate + ADP + H(+). The protein operates within carbohydrate degradation; glycolysis; D-glyceraldehyde 3-phosphate and glycerone phosphate from D-glucose: step 3/4. Catalyzes the phosphorylation of D-fructose 6-phosphate to fructose 1,6-bisphosphate by ATP, the first committing step of glycolysis. The sequence is that of ATP-dependent 6-phosphofructokinase from Spirochaeta thermophila (strain ATCC 49972 / DSM 6192 / RI 19.B1).